A 295-amino-acid chain; its full sequence is Ribosomal RNA small subunit methyltransferase H (295 aa).

S-adenosyl-L-methionine-binding positions include 32 to 34 (GGY), Asp50, Phe77, Asp98, and Gln105. A disordered region spans residues 275 to 295 (KEISENTRSRSAKLRGIVKEE).

This sequence belongs to the methyltransferase superfamily. RsmH family.

The protein localises to the cytoplasm. The catalysed reaction is cytidine(1402) in 16S rRNA + S-adenosyl-L-methionine = N(4)-methylcytidine(1402) in 16S rRNA + S-adenosyl-L-homocysteine + H(+). Specifically methylates the N4 position of cytidine in position 1402 (C1402) of 16S rRNA. This Anaplasma phagocytophilum (strain HZ) protein is Ribosomal RNA small subunit methyltransferase H.